The following is a 74-amino-acid chain: U4-theraphotoxin-Cg1a (74 aa).

The signal sequence occupies residues 1 to 19; the sequence is MNATIFALLLLLNLAMYNA. A propeptide spanning residues 20-39 is cleaved from the precursor; the sequence is AEQSSETDMDDTLLIPEINR. 3 disulfides stabilise this stretch: Cys42-Cys56, Cys49-Cys61, and Cys55-Cys71.

It belongs to the neurotoxin 36 family. 01 subfamily. In terms of tissue distribution, expressed by the venom gland.

Its subcellular location is the secreted. In terms of biological role, probable ion channel inhibitor. This is U4-theraphotoxin-Cg1a from Chilobrachys guangxiensis (Chinese earth tiger tarantula).